The primary structure comprises 131 residues: Phosphoribosyl-AMP cyclohydrolase (131 aa).

Asp-80 contributes to the Mg(2+) binding site. Cys-81 provides a ligand contact to Zn(2+). Residues Asp-82 and Asp-84 each coordinate Mg(2+). 2 residues coordinate Zn(2+): Cys-98 and Cys-105.

This sequence belongs to the PRA-CH family. Homodimer. Requires Mg(2+) as cofactor. Zn(2+) is required as a cofactor.

The protein resides in the cytoplasm. The enzyme catalyses 1-(5-phospho-beta-D-ribosyl)-5'-AMP + H2O = 1-(5-phospho-beta-D-ribosyl)-5-[(5-phospho-beta-D-ribosylamino)methylideneamino]imidazole-4-carboxamide. It participates in amino-acid biosynthesis; L-histidine biosynthesis; L-histidine from 5-phospho-alpha-D-ribose 1-diphosphate: step 3/9. Catalyzes the hydrolysis of the adenine ring of phosphoribosyl-AMP. The chain is Phosphoribosyl-AMP cyclohydrolase from Azoarcus sp. (strain BH72).